Reading from the N-terminus, the 508-residue chain is uncharacterized protein (508 aa).

A run of 12 helical transmembrane segments spans residues 65-87 (IFPV…SYAV), 104-124 (WSGT…SLLL), 136-156 (FLVI…PGFI), 160-180 (VLLG…TAQW), 192-212 (VWVA…YGLA), 224-244 (LIFI…LAVV), 292-312 (TWIM…IGTF), 333-353 (LPAG…SLFI), 357-377 (MVLA…LSFA), 384-404 (LAGY…FAII), 416-436 (TVGV…PQTF), and 450-470 (TMVG…YVNW).

It belongs to the major facilitator superfamily. Allantoate permease family.

The protein localises to the endoplasmic reticulum. It is found in the golgi apparatus. It localises to the membrane. This is an uncharacterized protein from Schizosaccharomyces pombe (strain 972 / ATCC 24843) (Fission yeast).